Reading from the N-terminus, the 658-residue chain is DNA ligase (658 aa).

Residues D32–D36 and S81–L82 each bind NAD(+). The N6-AMP-lysine intermediate role is filled by K112. NAD(+) is bound by residues R133, E167, and K306. Zn(2+) is bound by residues C400, C403, C416, and C421. A BRCT domain is found at E577 to N658.

It belongs to the NAD-dependent DNA ligase family. LigA subfamily. Mg(2+) serves as cofactor. The cofactor is Mn(2+).

The catalysed reaction is NAD(+) + (deoxyribonucleotide)n-3'-hydroxyl + 5'-phospho-(deoxyribonucleotide)m = (deoxyribonucleotide)n+m + AMP + beta-nicotinamide D-nucleotide.. Its function is as follows. DNA ligase that catalyzes the formation of phosphodiester linkages between 5'-phosphoryl and 3'-hydroxyl groups in double-stranded DNA using NAD as a coenzyme and as the energy source for the reaction. It is essential for DNA replication and repair of damaged DNA. The protein is DNA ligase of Helicobacter pylori (strain G27).